Reading from the N-terminus, the 241-residue chain is Peptidoglycan endopeptidase RipB (241 aa).

A signal peptide spans 1-31 (MRHTRFHPIKLAWITAVVAGLMVGVATPADA). Residues 109-241 (RQAVEYVIRR…TPFVTRIIEY (133 aa)) enclose the NlpC/P60 domain. Catalysis depends on Cys-152, which acts as the Nucleophile. His-201 acts as the Proton acceptor in catalysis. The active site involves Glu-213.

It belongs to the peptidase C40 family. As to quaternary structure, monomer.

Its function is as follows. Peptidoglycan endopeptidase that cleaves the bond between D-glutamate and meso-diaminopimelate. Binds high-molecular weight peptidoglycan, but does not degrade it. Required for normal separation of daughter cells after cell division and cell wall integrity. Required for host cell invasion. The protein is Peptidoglycan endopeptidase RipB (ripB) of Mycobacterium tuberculosis (strain CDC 1551 / Oshkosh).